A 79-amino-acid polypeptide reads, in one-letter code: MADAGARRPFFRRRKTCPFTGANAPKIDYKDSKLLMRYISERGKIVPSRITAVSAKKQRELARAVKRARFLGLLPYVIR.

This sequence belongs to the bacterial ribosomal protein bS18 family. Part of the 30S ribosomal subunit. Forms a tight heterodimer with protein bS6.

Functionally, binds as a heterodimer with protein bS6 to the central domain of the 16S rRNA, where it helps stabilize the platform of the 30S subunit. This chain is Small ribosomal subunit protein bS18, found in Nitrobacter hamburgensis (strain DSM 10229 / NCIMB 13809 / X14).